Reading from the N-terminus, the 524-residue chain is Pentatricopeptide repeat-containing protein At1g02150 (524 aa).

PPR repeat units follow at residues 168–202, 203–237, 238–268, 274–304, 309–339, 344–378, and 379–413; these read DRRVYGSLLNAYVRAKSREKAEALLNTMRDKGYAL, HPLPFNVMMTLYMNLREYDKVDAMVFEMKQKDIRL, DIYSYNIWLSSCGSLGSVEKMELVYQQMKSD, NWTTFSTMATMYIKMGETEKAEDALRKVEAR, NRIPYHYLLSLYGSLGNKKELYRVWHVYKSV, PNLGYHALVSSLVRMGDIEGAEKVYEEWLPVKSSY, and DPRIPNLLMNAYVKNDQLETAEGLFDHMVEMGGKP.

The protein belongs to the PPR family. P subfamily.

This chain is Pentatricopeptide repeat-containing protein At1g02150, found in Arabidopsis thaliana (Mouse-ear cress).